The chain runs to 471 residues: Glutamate--tRNA ligase (471 aa).

A 'HIGH' region motif is present at residues 9 to 19 (PSPTGYLHVGG). Zn(2+) is bound by residues Cys-98, Cys-100, Cys-125, and His-127. Positions 237–241 (KLSKR) match the 'KMSKS' region motif. Lys-240 provides a ligand contact to ATP.

This sequence belongs to the class-I aminoacyl-tRNA synthetase family. Glutamate--tRNA ligase type 1 subfamily. As to quaternary structure, monomer. Zn(2+) serves as cofactor.

The protein localises to the cytoplasm. It carries out the reaction tRNA(Glu) + L-glutamate + ATP = L-glutamyl-tRNA(Glu) + AMP + diphosphate. Catalyzes the attachment of glutamate to tRNA(Glu) in a two-step reaction: glutamate is first activated by ATP to form Glu-AMP and then transferred to the acceptor end of tRNA(Glu). The protein is Glutamate--tRNA ligase of Escherichia coli O9:H4 (strain HS).